The following is a 473-amino-acid chain: Photosystem II CP43 reaction center protein (473 aa).

The propeptide occupies Met1–Glu14. Residue Thr15 is modified to N-acetylthreonine. Thr15 is subject to Phosphothreonine. A run of 5 helical transmembrane segments spans residues Leu69 to Ala93, Leu134 to Asn155, Lys178 to Thr200, Lys255 to Ser275, and Trp291 to Ala312. Glu367 contacts [CaMn4O5] cluster. The helical transmembrane segment at Arg447 to Pro471 threads the bilayer.

It belongs to the PsbB/PsbC family. PsbC subfamily. As to quaternary structure, PSII is composed of 1 copy each of membrane proteins PsbA, PsbB, PsbC, PsbD, PsbE, PsbF, PsbH, PsbI, PsbJ, PsbK, PsbL, PsbM, PsbT, PsbX, PsbY, PsbZ, Psb30/Ycf12, at least 3 peripheral proteins of the oxygen-evolving complex and a large number of cofactors. It forms dimeric complexes. It depends on Binds multiple chlorophylls and provides some of the ligands for the Ca-4Mn-5O cluster of the oxygen-evolving complex. It may also provide a ligand for a Cl- that is required for oxygen evolution. PSII binds additional chlorophylls, carotenoids and specific lipids. as a cofactor.

The protein localises to the plastid. It is found in the chloroplast thylakoid membrane. One of the components of the core complex of photosystem II (PSII). It binds chlorophyll and helps catalyze the primary light-induced photochemical processes of PSII. PSII is a light-driven water:plastoquinone oxidoreductase, using light energy to abstract electrons from H(2)O, generating O(2) and a proton gradient subsequently used for ATP formation. The polypeptide is Photosystem II CP43 reaction center protein (Populus trichocarpa (Western balsam poplar)).